The sequence spans 391 residues: Protein ABCI12, chloroplastic (391 aa).

Residues 1-63 constitute a chloroplast transit peptide; sequence MNHSNLANPT…LAAKRVFIVR (63 aa). Transmembrane regions (helical) follow at residues 134 to 154, 168 to 188, 229 to 249, 263 to 283, and 370 to 390; these read ANLVVRLGLVLCTALLSILVL, LLSGILFITLGLGSDGAPPML, VGSTAACLTFIIFQSASICLA, FLFPLTYIGVPVSEIILTLLL, and FASVLCLIGVISTALLSEYFL.

The protein localises to the plastid. It is found in the chloroplast. It localises to the membrane. The chain is Protein ABCI12, chloroplastic (ABCI12) from Arabidopsis thaliana (Mouse-ear cress).